Reading from the N-terminus, the 444-residue chain is Coagulation factor VII (444 aa).

Positions Met-1 to Ala-21 are cleaved as a signal peptide. Positions Ala-22 to Arg-39 are excised as a propeptide. A Gla domain is found at Ala-40–Asn-84. A 4-carboxyglutamate mark is found at Glu-45, Glu-46, Glu-53, Glu-55, Glu-58, Glu-59, Glu-64, Glu-65, Glu-68, and Glu-74. A disulfide bridge connects residues Cys-56 and Cys-61. The EGF-like 1; calcium-binding domain maps to Asp-85–Glu-121. 9 cysteine pairs are disulfide-bonded: Cys-89-Cys-100, Cys-94-Cys-109, Cys-111-Cys-120, Cys-130-Cys-141, Cys-137-Cys-151, Cys-153-Cys-166, Cys-174-Cys-301, Cys-198-Cys-203, and Cys-217-Cys-233. O-linked (Glc...) serine; alternate glycosylation is present at Ser-91. Ser-91 carries an O-linked (Xyl...) serine; alternate glycan. An O-linked (Fuc) serine glycan is attached at Ser-99. The residue at position 102 (Asp-102) is a (3R)-3-hydroxyaspartate. The EGF-like 2 domain occupies Asp-126–Thr-167. The Peptidase S1 domain occupies Ile-192–Arg-431. N-linked (GlcNAc...) asparagine glycosylation is present at Asn-211. The Charge relay system role is filled by His-232. Asn-242 carries N-linked (GlcNAc...) asparagine glycosylation. Asp-281 functions as the Charge relay system in the catalytic mechanism. An N-linked (GlcNAc...) asparagine glycan is attached at Asn-306. The cysteines at positions 349 and 368 are disulfide-linked. Asp-377 contributes to the substrate binding site. Residues Cys-379 and Cys-407 are joined by a disulfide bond. The Charge relay system role is filled by Ser-383.

This sequence belongs to the peptidase S1 family. As to quaternary structure, heterodimer of a light chain and a heavy chain linked by a disulfide bond. Post-translationally, the vitamin K-dependent, enzymatic carboxylation of some glutamate residues allows the modified protein to bind calcium. In terms of processing, the iron and 2-oxoglutarate dependent 3-hydroxylation of aspartate and asparagine is (R) stereospecific within EGF domains. O-glycosylated. O-fucosylated by POFUT1 on a conserved serine or threonine residue found in the consensus sequence C2-X(4,5)-[S/T]-C3 of EGF domains, where C2 and C3 are the second and third conserved cysteines. Post-translationally, can be either O-glucosylated or O-xylosylated at Ser-91 by POGLUT1. Plasma.

It localises to the secreted. It carries out the reaction Selective cleavage of Arg-|-Ile bond in factor X to form factor Xa.. Initiates the extrinsic pathway of blood coagulation. Serine protease that circulates in the blood in a zymogen form. Factor VII is converted to factor VIIa by factor Xa, factor XIIa, factor IXa, or thrombin by minor proteolysis. In the presence of tissue factor and calcium ions, factor VIIa then converts factor X to factor Xa by limited proteolysis. Factor VIIa also converts factor IX to factor IXa in the presence of tissue factor and calcium. This is Coagulation factor VII (F7) from Oryctolagus cuniculus (Rabbit).